A 181-amino-acid polypeptide reads, in one-letter code: Ubiquitin-like protein 4B (181 aa).

Residues 1–76 (MWLTVKLLLG…LNVIIRPLEK (76 aa)) enclose the Ubiquitin-like domain. The interval 139–181 (PEGKHSGATGSTRESKGDMEPRRNMKCNLAHKDGFKREKSPGK) is disordered. Basic and acidic residues-rich tracts occupy residues 151–161 (RESKGDMEPRR) and 168–181 (AHKD…SPGK).

Its subcellular location is the cytoplasm. The protein is Ubiquitin-like protein 4B (UBL4B) of Monodelphis domestica (Gray short-tailed opossum).